Reading from the N-terminus, the 127-residue chain is Aspartate 1-decarboxylase (127 aa).

The Schiff-base intermediate with substrate; via pyruvic acid role is filled by Ser25. A Pyruvic acid (Ser) modification is found at Ser25. Residue Thr57 participates in substrate binding. Catalysis depends on Tyr58, which acts as the Proton donor. Gly73 to Ala75 contributes to the substrate binding site.

Belongs to the PanD family. In terms of assembly, heterooctamer of four alpha and four beta subunits. It depends on pyruvate as a cofactor. In terms of processing, is synthesized initially as an inactive proenzyme, which is activated by self-cleavage at a specific serine bond to produce a beta-subunit with a hydroxyl group at its C-terminus and an alpha-subunit with a pyruvoyl group at its N-terminus.

The protein resides in the cytoplasm. It catalyses the reaction L-aspartate + H(+) = beta-alanine + CO2. Its pathway is cofactor biosynthesis; (R)-pantothenate biosynthesis; beta-alanine from L-aspartate: step 1/1. Its function is as follows. Catalyzes the pyruvoyl-dependent decarboxylation of aspartate to produce beta-alanine. This is Aspartate 1-decarboxylase from Exiguobacterium sibiricum (strain DSM 17290 / CCUG 55495 / CIP 109462 / JCM 13490 / 255-15).